The sequence spans 510 residues: GMP synthase [glutamine-hydrolyzing] (510 aa).

Positions 5-195 (LVIVLDFGGQ…LFNIADLSAD (191 aa)) constitute a Glutamine amidotransferase type-1 domain. Residue C82 is the Nucleophile of the active site. Residues H169 and E171 contribute to the active site. In terms of domain architecture, GMPS ATP-PPase spans 196–385 (WTMGSYIEET…LGLHREIVER (190 aa)). 223 to 229 (SGGIDST) contacts ATP.

In terms of assembly, homodimer.

It catalyses the reaction XMP + L-glutamine + ATP + H2O = GMP + L-glutamate + AMP + diphosphate + 2 H(+). The protein operates within purine metabolism; GMP biosynthesis; GMP from XMP (L-Gln route): step 1/1. In terms of biological role, catalyzes the synthesis of GMP from XMP. The sequence is that of GMP synthase [glutamine-hydrolyzing] from Natranaerobius thermophilus (strain ATCC BAA-1301 / DSM 18059 / JW/NM-WN-LF).